Here is a 341-residue protein sequence, read N- to C-terminus: Ketol-acid reductoisomerase (NADP(+)) (341 aa).

Positions 2–181 (AKVYYNGDAN…GAARAGVLET (180 aa)) constitute a KARI N-terminal Rossmann domain. NADP(+)-binding positions include 25–28 (YGSQ), Arg-48, Ser-52, and 82–85 (DEKQ). The active site involves His-107. Gly-133 serves as a coordination point for NADP(+). Residues 182–327 (TFKEETETDL…RELRSMMPFV (146 aa)) enclose the KARI C-terminal knotted domain. 4 residues coordinate Mg(2+): Asp-190, Glu-194, Glu-226, and Glu-230. Ser-251 contacts substrate.

It belongs to the ketol-acid reductoisomerase family. Mg(2+) is required as a cofactor.

It carries out the reaction (2R)-2,3-dihydroxy-3-methylbutanoate + NADP(+) = (2S)-2-acetolactate + NADPH + H(+). The enzyme catalyses (2R,3R)-2,3-dihydroxy-3-methylpentanoate + NADP(+) = (S)-2-ethyl-2-hydroxy-3-oxobutanoate + NADPH + H(+). It participates in amino-acid biosynthesis; L-isoleucine biosynthesis; L-isoleucine from 2-oxobutanoate: step 2/4. The protein operates within amino-acid biosynthesis; L-valine biosynthesis; L-valine from pyruvate: step 2/4. Its function is as follows. Involved in the biosynthesis of branched-chain amino acids (BCAA). Catalyzes an alkyl-migration followed by a ketol-acid reduction of (S)-2-acetolactate (S2AL) to yield (R)-2,3-dihydroxy-isovalerate. In the isomerase reaction, S2AL is rearranged via a Mg-dependent methyl migration to produce 3-hydroxy-3-methyl-2-ketobutyrate (HMKB). In the reductase reaction, this 2-ketoacid undergoes a metal-dependent reduction by NADPH to yield (R)-2,3-dihydroxy-isovalerate. In Geobacillus thermodenitrificans (strain NG80-2), this protein is Ketol-acid reductoisomerase (NADP(+)).